The primary structure comprises 604 residues: Glutamine--fructose-6-phosphate aminotransferase [isomerizing] (604 aa).

The active-site Nucleophile; for GATase activity is the C2. A Glutamine amidotransferase type-2 domain is found at 2-218; sequence CGIVGVVGNR…DKELVILTKD (217 aa). SIS domains are found at residues 284–423 and 452–594; these read IITS…ANGK and VAEK…VDKP. Catalysis depends on K599, which acts as the For Fru-6P isomerization activity.

As to quaternary structure, homodimer.

It is found in the cytoplasm. The enzyme catalyses D-fructose 6-phosphate + L-glutamine = D-glucosamine 6-phosphate + L-glutamate. Its function is as follows. Catalyzes the first step in hexosamine metabolism, converting fructose-6P into glucosamine-6P using glutamine as a nitrogen source. The chain is Glutamine--fructose-6-phosphate aminotransferase [isomerizing] from Streptococcus pyogenes serotype M3 (strain ATCC BAA-595 / MGAS315).